Reading from the N-terminus, the 37-residue chain is Large ribosomal subunit protein bL36 (37 aa).

Belongs to the bacterial ribosomal protein bL36 family.

The protein is Large ribosomal subunit protein bL36 of Synechococcus sp. (strain WH7803).